The chain runs to 196 residues: MSKAAGKLKSLKKTVERVTHTSKLKTNIPAGMAAAGPPLGPMLGQRAINIAAFCKDFNAKTAEMKEGVPLPCRISVNSDRSYDLAIHHPPATFFLKQAAGIQRGTMTPGKEVAGMITLKHLYEIAAIKIQDPPNVLLTMQQMCEMLISIARTCGIKVVREIDPAAYGEFLEERKLIVEQQRRELQEKREAKMLRTG.

The protein belongs to the universal ribosomal protein uL11 family. In terms of assembly, component of the mitochondrial ribosome large subunit (39S) which comprises a 16S rRNA and about 50 distinct proteins.

It is found in the mitochondrion. This Drosophila melanogaster (Fruit fly) protein is Large ribosomal subunit protein uL11m (mRpL11).